A 165-amino-acid chain; its full sequence is Nucleotide-binding protein Pro_0479 (165 aa).

This sequence belongs to the YajQ family.

In terms of biological role, nucleotide-binding protein. This is Nucleotide-binding protein Pro_0479 from Prochlorococcus marinus (strain SARG / CCMP1375 / SS120).